A 511-amino-acid chain; its full sequence is Lysine--tRNA ligase 2 (511 aa).

The tract at residues 1 to 22 is disordered; that stretch reads MTMEINNTDPFEKMPLPDDSGL. Mg(2+) is bound by residues Glu-421 and Glu-428.

This sequence belongs to the class-II aminoacyl-tRNA synthetase family. In terms of assembly, homodimer. Requires Mg(2+) as cofactor.

The protein localises to the cytoplasm. It carries out the reaction tRNA(Lys) + L-lysine + ATP = L-lysyl-tRNA(Lys) + AMP + diphosphate. In Methanosarcina mazei (strain ATCC BAA-159 / DSM 3647 / Goe1 / Go1 / JCM 11833 / OCM 88) (Methanosarcina frisia), this protein is Lysine--tRNA ligase 2.